Consider the following 663-residue polypeptide: Polyunsaturated fatty acid lipoxygenase ALOX15 (663 aa).

The 114-residue stretch at 2–115 (GLYRVRVSTG…ILSLPEGTGR (114 aa)) folds into the PLAT domain. Residues 116–663 (TVVDDPQGLF…PSLVENSVAI (548 aa)) enclose the Lipoxygenase domain. Positions 361, 366, 541, 545, and 663 each coordinate Fe cation.

Belongs to the lipoxygenase family. Interacts with PEBP1; in response to IL13/interleukin-13, prevents the interaction of PEBP1 with RAF1 to activate the ERK signaling cascade. Requires Fe cation as cofactor. In terms of tissue distribution, detected in tracheal epithelium.

The protein localises to the cytoplasm. Its subcellular location is the cytosol. It localises to the cell membrane. The protein resides in the lipid droplet. It catalyses the reaction (5Z,8Z,11Z,14Z)-eicosatetraenoate + O2 = (12S)-hydroperoxy-(5Z,8Z,10E,14Z)-eicosatetraenoate. The catalysed reaction is (5Z,8Z,11Z,14Z)-eicosatetraenoate + O2 = (15S)-hydroperoxy-(5Z,8Z,11Z,13E)-eicosatetraenoate. It carries out the reaction (9Z,12Z)-octadecadienoate + O2 = (13S)-hydroperoxy-(9Z,11E)-octadecadienoate. The enzyme catalyses (5Z,8Z,11Z,14Z)-eicosatetraenoate + 2 O2 = (14R,15S)-dihydroperoxy-(5Z,8Z,10E,12E)-eicosatetraenoate. It catalyses the reaction (5Z,8Z,11Z,14Z)-eicosatetraenoate + 2 O2 = (8S,15S)-dihydroperoxy-(5Z,9E,11Z,13E)-eicosatetraenoate. The catalysed reaction is (14S,15R)-epoxy-(5Z,8Z,11Z)-eicosatrienoate + O2 = (8S)-hydroperoxy-(14S,15R)-epoxy-(5Z,9E,11Z)-eicosatrienoate. It carries out the reaction (14S,15R)-epoxy-(5Z,8Z,11Z)-eicosatrienoate + O2 = (12S)-hydroperoxy-(14S,15R)-epoxy-(5Z,8Z,10E)-eicosatrienoate. The enzyme catalyses (14R,15S)-epoxy-(5Z,8Z,11Z)-eicosatrienoate + O2 = (5S)-hydroperoxy-(14R,15S)-epoxy-(6E,8Z,11Z)-eicosatrienoate. It catalyses the reaction (14R,15S)-epoxy-(5Z,8Z,11Z)-eicosatrienoate + O2 = (12S)-hydroperoxy-(14R,15S)-epoxy-(5Z,8Z,10E)-eicosatrienoate. The catalysed reaction is (15R)-hydroperoxy-(5Z,8Z,11Z,13E)-eicosatetraenoate = 15-oxo-(5Z,8Z,11Z,13E)-eicosatetraenoate + H2O. It carries out the reaction (15S)-hydroperoxy-(5Z,8Z,11Z,13E)-eicosatetraenoate = (14S,15S)-epoxy-(5Z,8Z,10E,12E)-eicosatetraenoate + H2O. The enzyme catalyses (12S)-hydroperoxy-(5Z,8Z,10E,14Z)-eicosatetraenoate = (8S)-hydroxy-(11S,12S)-epoxy-(5Z,9E,14Z)-eicosatrienoate. It catalyses the reaction (4Z,7Z,10Z,13Z,16Z)-docosapentaenoate + O2 = 14-hydroperoxy-(4Z,7Z,10Z,12E,16Z)-docosapentaenoate. The catalysed reaction is (7Z,10Z,13Z,16Z,19Z)-docosapentaenoate + O2 = 14-hydroperoxy-(7Z,10Z,12E,16Z,19Z)-docosapentaenoate. It carries out the reaction (4Z,7Z,10Z,13Z,16Z,19Z)-docosahexaenoate + O2 = (14S)-hydroperoxy-(4Z,7Z,10Z,12E,16Z,19Z)-docosahexaenoate. The enzyme catalyses (4Z,7Z,10Z,13Z,16Z,19Z)-docosahexaenoate + O2 = (17S)-hydroperoxy-(4Z,7Z,10Z,13Z,15E,19Z)-docosahexaenoate. It catalyses the reaction (7S)-hydroperoxy-(4Z,8E,10Z,13Z,16Z,19Z)-docosahexaenoate + O2 = (7S,14S)-dihydroperoxy-(4Z,8E,10Z,12E,16Z,19Z)-docosahexaenoate. The catalysed reaction is (7S)-hydroperoxy-(4Z,8E,10Z,13Z,16Z,19Z)-docosahexaenoate + O2 = (7S,17S)-dihydroperoxy-(4Z,8E,10Z,13Z,15E,19Z)-docosahexaenoate. It carries out the reaction (4Z,7Z,10Z,13Z,16Z,19Z)-docosahexaenoate + O2 = (11S)-hydroperoxy-(4Z,7Z,9E,13Z,16Z,19Z)-docosahexaenoate. The enzyme catalyses N-(5Z,8Z,11Z,14Z)-eicosatetraenoyl-taurine + O2 = N-(12S)-hydroperoxy-(5Z,8Z,10E,14Z)-eicosatetraenoyl-taurine. It catalyses the reaction N-(5Z,8Z,11Z,14Z)-eicosatetraenoyl-gamma-aminobutanoate + O2 = N-(12S)-hydroperoxy-(5Z,8Z,10E,14Z)-eicosatetraenoyl-gamma-aminobutanoate. The catalysed reaction is N-(5Z,8Z,11Z,14Z)-eicosatetraenoyl-glycine + O2 = N-(12S)-hydroperoxy-(5Z,8Z,10E,14Z)-eicosatetraenoyl-glycine. It carries out the reaction N-(5Z,8Z,11Z,14Z)-eicosatetraenoyl-L-alanine + O2 = N-(12S)-hydroperoxy-(5Z,8Z,10E,14Z)-eicosatetraenoyl-alanine. The enzyme catalyses N-(5Z,8Z,11Z,14Z)-eicosatetraenoyl-taurine + O2 = N-(15S)-hydroperoxy-(5Z,8Z,11Z,13E)-eicosatetraenoyl-taurine. It catalyses the reaction N-(5Z,8Z,11Z,14Z)-eicosatetraenoyl-gamma-aminobutanoate + O2 = N-(15S)-hydroperoxy-(5Z,8Z,11Z,13E)-eicosatetraenoyl-gamma-aminobutanoate. The catalysed reaction is N-(5Z,8Z,11Z,14Z)-eicosatetraenoyl-glycine + O2 = N-(15S)-hydroperoxy-(5Z,8Z,11Z,13E)-eicosatetraenoyl-glycine. It carries out the reaction N-(5Z,8Z,11Z,14Z)-eicosatetraenoyl-L-alanine + O2 = N-(15S)-hydroperoxy-(5Z,8Z,11Z,13E)-eicosatetraenoyl-alanine. Its pathway is lipid metabolism; hydroperoxy eicosatetraenoic acid biosynthesis. Functionally, non-heme iron-containing dioxygenase that catalyzes the stereo-specific peroxidation of free and esterified polyunsaturated fatty acids generating a spectrum of bioactive lipid mediators. It inserts peroxyl groups at C12 or C15 of arachidonate ((5Z,8Z,11Z,14Z)-eicosatetraenoate) producing both 12-hydroperoxyeicosatetraenoate/12-HPETE and 15-hydroperoxyeicosatetraenoate/15-HPETE. It may then act on 12-HPETE to produce hepoxilins, which may show pro-inflammatory properties. Can also peroxidize linoleate ((9Z,12Z)-octadecadienoate) to 13-hydroperoxyoctadecadienoate. May participate in the sequential oxidations of DHA ((4Z,7Z,10Z,13Z,16Z,19Z)-docosahexaenoate) to generate specialized pro-resolving mediators (SPMs)like resolvin D5 ((7S,17S)-diHPDHA) and (7S,14S)-diHPDHA, that actively down-regulate the immune response and have anti-aggregation properties with platelets. Can convert epoxy fatty acids to hydroperoxy-epoxides derivatives followed by an intramolecular nucleophilic substitution leading to the formation of monocyclic endoperoxides. Plays an important role during the maintenance of self-tolerance by peroxidizing membrane-bound phosphatidylethanolamine which can then signal the sorting process for clearance of apoptotic cells during inflammation and prevent an autoimmune response. In addition to its role in the immune and inflammatory responses, this enzyme may play a role in epithelial wound healing in the cornea through production of lipoxin A4 (LXA(4)) and docosahexaenoic acid-derived neuroprotectin D1 (NPD1; 10R,17S-HDHA), both lipid autacoids exhibit anti-inflammatory and neuroprotective properties. Furthermore, it may regulate actin polymerization which is crucial for several biological processes such as the phagocytosis of apoptotic cells. It is also implicated in the generation of endogenous ligands for peroxisome proliferator activated receptor (PPAR-gamma), hence modulating macrophage development and function. It may also exert a negative effect on skeletal development by regulating bone mass through this pathway. As well as participates in ER stress and downstream inflammation in adipocytes, pancreatic islets, and liver. Finally, it is also involved in the cellular response to IL13/interleukin-13. In Bos taurus (Bovine), this protein is Polyunsaturated fatty acid lipoxygenase ALOX15.